We begin with the raw amino-acid sequence, 400 residues long: Dehydrogenase efuE (400 aa).

Residues 222 to 223 (AI), 303 to 305 (TAR), and D329 contribute to the NAD(+) site. The active site involves R305. Residue E334 is part of the active site. H352 functions as the Proton donor in the catalytic mechanism. 352-355 (HLGG) is an NAD(+) binding site.

Belongs to the D-isomer specific 2-hydroxyacid dehydrogenase family.

Its pathway is secondary metabolite biosynthesis; terpenoid biosynthesis. Functionally, dehydrogenase; part of the gene cluster that mediates the biosynthesis of enfumafungin, a glycosylated fernene-type triterpenoid with potent antifungal activity, mediated by its interaction with beta-1,3-glucan synthase and the fungal cell wall. The pathway begins with the terpene cyclase-glycosyl transferase fusion protein that most likely uses 2,3-oxidosqualene as substrate and catalyzes glycosylation immediately after cyclization. The fernene glycoside then could be processed by the desaturase efuI which catalyzes isomerization of a double bond established by efuA to form the core structure. The latter would then undergo a series of hydroxylations in unknown order at C-2, C-19, C-23 and C-25, which would be catalyzed by two of the three cytochrome P450 monooxygenases efuB, efuG or efuH. The hydroxy-group at C-25 becomes oxidized by the dehydrogenase efuE to enable a spontaneous, non-enzymatic hemiacetal formation with C-23. After hydroxylation at C-2, acetylation by the acetyltransferase efuC takes place. The final steps in enfumafungin biosynthesis require expansion of the 5-membered ring by lactonization via a Baeyer-Villiger reaction mediated by one of the BGC's cytochrome P450 monooxygenases (efuB, efuG or efuH) followed by ring cleavage. This type of reaction would establish a double bond between C-20 and C-21 which could be reduced by the reductase efuL to form the final product. This chain is Dehydrogenase efuE, found in Hormonema carpetanum.